The sequence spans 254 residues: Tubulin-specific chaperone B (254 aa).

The CAP-Gly domain occupies 182–225 (PLPLDVMGTWCGVEFPEAAGKNDGRINGVTLFGPVAPGHGSFVR). The interval 234–254 (KDEESAEVEDVHDDVESDDEI) is disordered. Over residues 237-254 (ESAEVEDVHDDVESDDEI) the composition is skewed to acidic residues.

This sequence belongs to the TBCB family. In terms of assembly, binds to monomeric alpha-tubulin.

The protein localises to the cytoplasm. It localises to the cytoskeleton. Functionally, acts to sequester alpha-tubulin from interaction with beta-tubulin, raising the possibility that it plays a regulatory role in the formation of the tubulin heterodimer. The chain is Tubulin-specific chaperone B (ALF1) from Saccharomyces cerevisiae (strain ATCC 204508 / S288c) (Baker's yeast).